The chain runs to 462 residues: A-type ATP synthase subunit B (462 aa).

Belongs to the ATPase alpha/beta chains family. In terms of assembly, has multiple subunits with at least A(3), B(3), C, D, E, F, H, I and proteolipid K(x).

It localises to the cell membrane. Functionally, component of the A-type ATP synthase that produces ATP from ADP in the presence of a proton gradient across the membrane. The B chain is a regulatory subunit. In Methanococcus maripaludis (strain C7 / ATCC BAA-1331), this protein is A-type ATP synthase subunit B.